Consider the following 342-residue polypeptide: Anthranilate phosphoribosyltransferase (342 aa).

5-phospho-alpha-D-ribose 1-diphosphate contacts are provided by residues glycine 79, 82 to 83, threonine 87, 89 to 92, 107 to 115, and serine 119; these read GD, NVST, and KHGNRAATS. Glycine 79 lines the anthranilate pocket. Mg(2+) is bound at residue serine 91. Asparagine 110 contacts anthranilate. Arginine 165 contributes to the anthranilate binding site. Mg(2+) contacts are provided by aspartate 224 and glutamate 225.

It belongs to the anthranilate phosphoribosyltransferase family. As to quaternary structure, homodimer. The cofactor is Mg(2+).

It carries out the reaction N-(5-phospho-beta-D-ribosyl)anthranilate + diphosphate = 5-phospho-alpha-D-ribose 1-diphosphate + anthranilate. It participates in amino-acid biosynthesis; L-tryptophan biosynthesis; L-tryptophan from chorismate: step 2/5. In terms of biological role, catalyzes the transfer of the phosphoribosyl group of 5-phosphorylribose-1-pyrophosphate (PRPP) to anthranilate to yield N-(5'-phosphoribosyl)-anthranilate (PRA). This chain is Anthranilate phosphoribosyltransferase, found in Rubrobacter xylanophilus (strain DSM 9941 / JCM 11954 / NBRC 16129 / PRD-1).